The following is a 177-amino-acid chain: Large ribosomal subunit protein uL22 (177 aa).

Positions 118–177 (VESRPSREGRRGGAGESAGGARARRAQGSKAAAAKKAPASSSTKAATTTEASEEAKGGSQ) are disordered. Positions 121-130 (RPSREGRRGG) are enriched in basic and acidic residues. Low complexity predominate over residues 145-167 (GSKAAAAKKAPASSSTKAATTTE).

It belongs to the universal ribosomal protein uL22 family. As to quaternary structure, part of the 50S ribosomal subunit.

In terms of biological role, this protein binds specifically to 23S rRNA; its binding is stimulated by other ribosomal proteins, e.g. L4, L17, and L20. It is important during the early stages of 50S assembly. It makes multiple contacts with different domains of the 23S rRNA in the assembled 50S subunit and ribosome. Functionally, the globular domain of the protein is located near the polypeptide exit tunnel on the outside of the subunit, while an extended beta-hairpin is found that lines the wall of the exit tunnel in the center of the 70S ribosome. The polypeptide is Large ribosomal subunit protein uL22 (Mycobacterium sp. (strain JLS)).